A 529-amino-acid polypeptide reads, in one-letter code: Bifunctional purine biosynthesis protein PurH (529 aa).

One can recognise an MGS-like domain in the interval 1 to 148 (MQQRRPVRRA…KNHKDVAIVV (148 aa)).

This sequence belongs to the PurH family.

The enzyme catalyses (6R)-10-formyltetrahydrofolate + 5-amino-1-(5-phospho-beta-D-ribosyl)imidazole-4-carboxamide = 5-formamido-1-(5-phospho-D-ribosyl)imidazole-4-carboxamide + (6S)-5,6,7,8-tetrahydrofolate. The catalysed reaction is IMP + H2O = 5-formamido-1-(5-phospho-D-ribosyl)imidazole-4-carboxamide. Its pathway is purine metabolism; IMP biosynthesis via de novo pathway; 5-formamido-1-(5-phospho-D-ribosyl)imidazole-4-carboxamide from 5-amino-1-(5-phospho-D-ribosyl)imidazole-4-carboxamide (10-formyl THF route): step 1/1. It functions in the pathway purine metabolism; IMP biosynthesis via de novo pathway; IMP from 5-formamido-1-(5-phospho-D-ribosyl)imidazole-4-carboxamide: step 1/1. This is Bifunctional purine biosynthesis protein PurH from Salmonella dublin (strain CT_02021853).